We begin with the raw amino-acid sequence, 64 residues long: Large ribosomal subunit protein uL29 (64 aa).

This sequence belongs to the universal ribosomal protein uL29 family.

This Cupriavidus metallidurans (strain ATCC 43123 / DSM 2839 / NBRC 102507 / CH34) (Ralstonia metallidurans) protein is Large ribosomal subunit protein uL29.